Consider the following 452-residue polypeptide: Bifunctional protein GlmU (452 aa).

A pyrophosphorylase region spans residues 1–232; the sequence is MTTNAPGAVI…EADMQGVNSR (232 aa). UDP-N-acetyl-alpha-D-glucosamine contacts are provided by residues 11 to 14, K25, Q78, and 83 to 84; these read LAAG and GT. D108 is a binding site for Mg(2+). UDP-N-acetyl-alpha-D-glucosamine contacts are provided by G144, E158, and N230. Position 230 (N230) interacts with Mg(2+). Residues 233-253 are linker; that stretch reads ADLAAAEATMQQRLRMAAMAG. Residues 254–452 are N-acetyltransferase; sequence GVTMLDPSSV…HKDKKKASGE (199 aa). UDP-N-acetyl-alpha-D-glucosamine is bound by residues R319 and K337. H349 serves as the catalytic Proton acceptor. The UDP-N-acetyl-alpha-D-glucosamine site is built by Y352 and N363. Residues A366, 372 to 373, S391, S409, and R426 each bind acetyl-CoA; that span reads NY.

It in the N-terminal section; belongs to the N-acetylglucosamine-1-phosphate uridyltransferase family. In the C-terminal section; belongs to the transferase hexapeptide repeat family. As to quaternary structure, homotrimer. The cofactor is Mg(2+).

Its subcellular location is the cytoplasm. The catalysed reaction is alpha-D-glucosamine 1-phosphate + acetyl-CoA = N-acetyl-alpha-D-glucosamine 1-phosphate + CoA + H(+). It catalyses the reaction N-acetyl-alpha-D-glucosamine 1-phosphate + UTP + H(+) = UDP-N-acetyl-alpha-D-glucosamine + diphosphate. It functions in the pathway nucleotide-sugar biosynthesis; UDP-N-acetyl-alpha-D-glucosamine biosynthesis; N-acetyl-alpha-D-glucosamine 1-phosphate from alpha-D-glucosamine 6-phosphate (route II): step 2/2. The protein operates within nucleotide-sugar biosynthesis; UDP-N-acetyl-alpha-D-glucosamine biosynthesis; UDP-N-acetyl-alpha-D-glucosamine from N-acetyl-alpha-D-glucosamine 1-phosphate: step 1/1. Its pathway is bacterial outer membrane biogenesis; LPS lipid A biosynthesis. Catalyzes the last two sequential reactions in the de novo biosynthetic pathway for UDP-N-acetylglucosamine (UDP-GlcNAc). The C-terminal domain catalyzes the transfer of acetyl group from acetyl coenzyme A to glucosamine-1-phosphate (GlcN-1-P) to produce N-acetylglucosamine-1-phosphate (GlcNAc-1-P), which is converted into UDP-GlcNAc by the transfer of uridine 5-monophosphate (from uridine 5-triphosphate), a reaction catalyzed by the N-terminal domain. This chain is Bifunctional protein GlmU, found in Parvibaculum lavamentivorans (strain DS-1 / DSM 13023 / NCIMB 13966).